Consider the following 355-residue polypeptide: Lipoyl synthase (355 aa).

One can recognise an RPE1 insert domain in the interval H7–K55. C86, C91, C97, C112, C116, C119, and S325 together coordinate [4Fe-4S] cluster. A Radical SAM core domain is found at W98–L314.

The protein belongs to the radical SAM superfamily. Lipoyl synthase family. It depends on [4Fe-4S] cluster as a cofactor.

It localises to the cytoplasm. It carries out the reaction [[Fe-S] cluster scaffold protein carrying a second [4Fe-4S](2+) cluster] + N(6)-octanoyl-L-lysyl-[protein] + 2 oxidized [2Fe-2S]-[ferredoxin] + 2 S-adenosyl-L-methionine + 4 H(+) = [[Fe-S] cluster scaffold protein] + N(6)-[(R)-dihydrolipoyl]-L-lysyl-[protein] + 4 Fe(3+) + 2 hydrogen sulfide + 2 5'-deoxyadenosine + 2 L-methionine + 2 reduced [2Fe-2S]-[ferredoxin]. Its pathway is protein modification; protein lipoylation via endogenous pathway; protein N(6)-(lipoyl)lysine from octanoyl-[acyl-carrier-protein]: step 2/2. Its function is as follows. Catalyzes the radical-mediated insertion of two sulfur atoms into the C-6 and C-8 positions of the octanoyl moiety bound to the lipoyl domains of lipoate-dependent enzymes, thereby converting the octanoylated domains into lipoylated derivatives. This chain is Lipoyl synthase, found in Rickettsia bellii (strain RML369-C).